Here is a 413-residue protein sequence, read N- to C-terminus: Hemolin (413 aa).

Residues 1–18 form the signal peptide; it reads MASKSLVVLSACIIIGSA. Ig-like C2-type domains are found at residues 25–112, 122–211, 233–322, and 327–413; these read PVLK…RVIS, PAKT…GEVR, PQYL…LKVT, and PKYV…VQVN. 4 disulfide bridges follow: Cys46–Cys97, Cys140–Cys199, Cys252–Cys305, and Cys349–Cys395. N-linked (GlcNAc...) asparagine glycosylation occurs at Asn283.

It belongs to the hemolin family. In terms of tissue distribution, expressed in larval bristles.

Its subcellular location is the secreted. Its activity is regulated as follows. Increased activity in presence of phospholipids (low concentrations) and calcium ions. Inhibited by PMSF. Not affected by EDTA and E-64. In terms of biological role, bristle toxin involved in caterpillar defense by participating in hemorrhagic syndrome characterized by a consumptive coagulopathy. Exhibits procoagulant activity through selective factor X proteolytic activation. Activates factor X in a dose- and time-dependent manner but does not activate gamma-carboxyglutamic acid domainless factor X. Its activity does not depend on calcium ions. Also functions as a growth stimulator and an inhibitor of cellular death for endothelial cells. In vitro, increases proliferation of human umbilical vein endothelial cells (HUVEC) and inhibits the apoptosis induced by starvation. Also increases slightly the complement decay-accelerating factor (CD55), which protects cells from complement-mediated lysis. On the other hand, does not alter the release or expression of von Willebrand factor (VWF), tissue factor (F3), intercellular adhesion molecule-1 (ICAM1), interleukin-8 (CXCL8), and prostacyclin. Does not show fibrinolytic or fibrinogenolytic activities. In Lonomia obliqua (Moth), this protein is Hemolin.